The sequence spans 533 residues: Flavin-containing monooxygenase 5 (533 aa).

Arg-5 carries the post-translational modification Dimethylated arginine. Residues 10–14, Glu-33, and 41–42 each bind FAD; these read GSGAS and LW. Residue Ser-54 is modified to Phosphoserine. The residue at position 56 (Tyr-56) is a Phosphotyrosine. Phosphoserine is present on Ser-58. 62–63 contributes to the FAD binding site; the sequence is NT. 196–199 contributes to the NADP(+) binding site; it reads SGGD. Thr-284 carries the post-translational modification Phosphothreonine. Residue Ser-401 is modified to Phosphoserine. The chain crosses the membrane as a helical span at residues 513–533; it reads LVTVRVLMLAVTFLAVILAYF.

Belongs to the FMO family. It depends on FAD as a cofactor.

Its subcellular location is the microsome membrane. The protein localises to the endoplasmic reticulum membrane. The enzyme catalyses N,N-dimethylaniline + NADPH + O2 + H(+) = N,N-dimethylaniline N-oxide + NADP(+) + H2O. The catalysed reaction is NADPH + O2 + H(+) = H2O2 + NADP(+). It catalyses the reaction heptan-2-one + NADPH + O2 + H(+) = pentyl acetate + NADP(+) + H2O. It carries out the reaction octan-3-one + NADPH + O2 + H(+) = pentyl propanoate + NADP(+) + H2O. The enzyme catalyses octan-3-one + NADPH + O2 + H(+) = ethyl hexanoate + NADP(+) + H2O. The catalysed reaction is hexan-3-one + NADPH + O2 + H(+) = ethyl butanoate + NADP(+) + H2O. It catalyses the reaction hexan-3-one + NADPH + O2 + H(+) = propyl propanoate + NADP(+) + H2O. It carries out the reaction heptan-4-one + NADPH + O2 + H(+) = propyl butanoate + NADP(+) + H2O. The enzyme catalyses (2E)-geranial + NADPH + O2 + H(+) = (1E)-2,6-dimethylhepta-1,5-dien-1-yl formate + NADP(+) + H2O. The catalysed reaction is sulcatone + NADPH + O2 + H(+) = 4-methylpent-3-en-1-yl acetate + NADP(+) + H2O. Acts as a Baeyer-Villiger monooxygenase on a broad range of substrates. Catalyzes the insertion of an oxygen atom into a carbon-carbon bond adjacent to a carbonyl, which converts ketones to esters. Active on diverse carbonyl compounds, whereas soft nucleophiles are mostly non- or poorly reactive. In contrast with other forms of FMO it is non- or poorly active on 'classical' substrates such as drugs, pesticides, and dietary components containing soft nucleophilic heteroatoms. Able to oxidize drug molecules bearing a carbonyl group on an aliphatic chain, such as nabumetone and pentoxifylline. Also, in the absence of substrates, shows slow but yet significant NADPH oxidase activity. Acts as a positive modulator of cholesterol biosynthesis as well as glucose homeostasis, promoting metabolic aging via pleiotropic effects. The chain is Flavin-containing monooxygenase 5 from Rattus norvegicus (Rat).